Reading from the N-terminus, the 422-residue chain is UDP-N-acetylglucosamine 1-carboxyvinyltransferase (422 aa).

22–23 provides a ligand contact to phosphoenolpyruvate; it reads KN. Residue Arg-93 coordinates UDP-N-acetyl-alpha-D-glucosamine. The active-site Proton donor is Cys-117. The residue at position 117 (Cys-117) is a 2-(S-cysteinyl)pyruvic acid O-phosphothioketal. UDP-N-acetyl-alpha-D-glucosamine is bound by residues 122–126, Asp-308, and Leu-330; that span reads RPVDL.

This sequence belongs to the EPSP synthase family. MurA subfamily.

It is found in the cytoplasm. The catalysed reaction is phosphoenolpyruvate + UDP-N-acetyl-alpha-D-glucosamine = UDP-N-acetyl-3-O-(1-carboxyvinyl)-alpha-D-glucosamine + phosphate. It functions in the pathway cell wall biogenesis; peptidoglycan biosynthesis. In terms of biological role, cell wall formation. Adds enolpyruvyl to UDP-N-acetylglucosamine. This is UDP-N-acetylglucosamine 1-carboxyvinyltransferase from Helicobacter pylori (strain J99 / ATCC 700824) (Campylobacter pylori J99).